Reading from the N-terminus, the 326-residue chain is Undecaprenyl-phosphate 4-deoxy-4-formamido-L-arabinose transferase (326 aa).

A run of 2 helical transmembrane segments spans residues Leu235–Ile255 and Val270–Leu290.

This sequence belongs to the glycosyltransferase 2 family.

Its subcellular location is the cell inner membrane. It catalyses the reaction UDP-4-deoxy-4-formamido-beta-L-arabinose + di-trans,octa-cis-undecaprenyl phosphate = 4-deoxy-4-formamido-alpha-L-arabinopyranosyl di-trans,octa-cis-undecaprenyl phosphate + UDP. The protein operates within glycolipid biosynthesis; 4-amino-4-deoxy-alpha-L-arabinose undecaprenyl phosphate biosynthesis; 4-amino-4-deoxy-alpha-L-arabinose undecaprenyl phosphate from UDP-4-deoxy-4-formamido-beta-L-arabinose and undecaprenyl phosphate: step 1/2. It functions in the pathway bacterial outer membrane biogenesis; lipopolysaccharide biosynthesis. In terms of biological role, catalyzes the transfer of 4-deoxy-4-formamido-L-arabinose from UDP to undecaprenyl phosphate. The modified arabinose is attached to lipid A and is required for resistance to polymyxin and cationic antimicrobial peptides. The chain is Undecaprenyl-phosphate 4-deoxy-4-formamido-L-arabinose transferase from Serratia proteamaculans (strain 568).